The primary structure comprises 165 residues: Small ribosomal subunit protein uS5 (165 aa).

The S5 DRBM domain occupies 13 to 76 (LEEKVLVVNR…EAARKNLITI (64 aa)).

The protein belongs to the universal ribosomal protein uS5 family. Part of the 30S ribosomal subunit. Contacts proteins S4 and S8.

In terms of biological role, with S4 and S12 plays an important role in translational accuracy. Its function is as follows. Located at the back of the 30S subunit body where it stabilizes the conformation of the head with respect to the body. The protein is Small ribosomal subunit protein uS5 of Chlamydia abortus (strain DSM 27085 / S26/3) (Chlamydophila abortus).